Reading from the N-terminus, the 267-residue chain is Syntaxin-72 (267 aa).

Residues 1–244 (MPVIDIIFRV…QLVQMRSSRN (244 aa)) lie on the Cytoplasmic side of the membrane. Residues 53–87 (KAELASTEKNRAAAVAMNAEVRRTKARLAEDVVKL) adopt a coiled-coil conformation. The t-SNARE coiled-coil homology domain maps to 173–235 (EMRRKKQDEG…KNTNVRLKKQ (63 aa)). The helical; Anchor for type IV membrane protein transmembrane segment at 245-265 (FCIDIILLCVILGIVSYIYNA) threads the bilayer. At 266-267 (LN) the chain is on the vesicular side.

This sequence belongs to the syntaxin family. In terms of assembly, part of the t-SNARE complex. In terms of tissue distribution, expressed in root, leaf, stem, flower and silique.

The protein localises to the membrane. Vesicle trafficking protein that functions in the secretory pathway. This Arabidopsis thaliana (Mouse-ear cress) protein is Syntaxin-72 (SYP72).